The sequence spans 303 residues: Acetylglutamate kinase (303 aa).

Substrate-binding positions include G76 to G77, R98, and N199.

The protein belongs to the acetylglutamate kinase family. ArgB subfamily.

Its subcellular location is the cytoplasm. It carries out the reaction N-acetyl-L-glutamate + ATP = N-acetyl-L-glutamyl 5-phosphate + ADP. The protein operates within amino-acid biosynthesis; L-arginine biosynthesis; N(2)-acetyl-L-ornithine from L-glutamate: step 2/4. Its function is as follows. Catalyzes the ATP-dependent phosphorylation of N-acetyl-L-glutamate. The protein is Acetylglutamate kinase of Clavibacter michiganensis subsp. michiganensis (strain NCPPB 382).